We begin with the raw amino-acid sequence, 100 residues long: Ubiquitin-related modifier 1 homolog (100 aa).

Gly-100 is subject to 1-thioglycine. Residue Gly-100 forms a Glycyl lysine isopeptide (Gly-Lys) (interchain with K-? in acceptor proteins) linkage.

It belongs to the URM1 family. In terms of processing, C-terminal thiocarboxylation occurs in 2 steps, it is first acyl-adenylated (-COAMP) via the hesA/moeB/thiF part of the MOCS3 homolog, then thiocarboxylated (-COSH) via the rhodanese domain of the MOCS3 homolog.

The protein localises to the cytoplasm. It functions in the pathway tRNA modification; 5-methoxycarbonylmethyl-2-thiouridine-tRNA biosynthesis. In terms of biological role, acts as a sulfur carrier required for 2-thiolation of mcm(5)S(2)U at tRNA wobble positions of cytosolic tRNA(Lys), tRNA(Glu) and tRNA(Gln). Serves as sulfur donor in tRNA 2-thiolation reaction by being thiocarboxylated (-COSH) at its C-terminus by MOCS3. The sulfur is then transferred to tRNA to form 2-thiolation of mcm(5)S(2)U. Also acts as a ubiquitin-like protein (UBL) that is covalently conjugated via an isopeptide bond to lysine residues of target proteins. The thiocarboxylated form serves as substrate for conjugation and oxidative stress specifically induces the formation of UBL-protein conjugates. This chain is Ubiquitin-related modifier 1 homolog, found in Caenorhabditis elegans.